A 287-amino-acid chain; its full sequence is 4-hydroxybenzoate octaprenyltransferase (287 aa).

The next 9 helical transmembrane spans lie at 21–41 (VGIFLLLWPTLWAVWIAAKGA), 44–64 (FKIAVIFIAGSVVMRAAGCIV), 91–111 (VTEAMLLFAVLSLIAFTLVLL), 112–132 (LNRLTVELAVIGILLALVYPF), 139–159 (LPQLWLGIAFSWSIPMAFAAT), 160–180 (VGHVPAVAWLLFFAAVLWPIV), 211–231 (LMIGLLQGSVLLTFGLLGWYL), 235–255 (YWFYLGLLVALGLMCYQQFLI), and 263–283 (CFAAFRNNNWVGFFIFLGILL).

Belongs to the UbiA prenyltransferase family. Mg(2+) serves as cofactor.

The protein resides in the cell inner membrane. It catalyses the reaction all-trans-octaprenyl diphosphate + 4-hydroxybenzoate = 4-hydroxy-3-(all-trans-octaprenyl)benzoate + diphosphate. It functions in the pathway cofactor biosynthesis; ubiquinone biosynthesis. In terms of biological role, catalyzes the prenylation of para-hydroxybenzoate (PHB) with an all-trans polyprenyl group. Mediates the second step in the final reaction sequence of ubiquinone-8 (UQ-8) biosynthesis, which is the condensation of the polyisoprenoid side chain with PHB, generating the first membrane-bound Q intermediate 3-octaprenyl-4-hydroxybenzoate. This chain is 4-hydroxybenzoate octaprenyltransferase, found in Coxiella burnetii (strain CbuK_Q154) (Coxiella burnetii (strain Q154)).